We begin with the raw amino-acid sequence, 578 residues long: Galectin-3-binding protein (578 aa).

The N-terminal stretch at 1–18 (MAFLWLFSLWLLVPGTQG) is a signal peptide. Residues 24–124 (MRLVNGASAN…HEKDAGVVCS (101 aa)) enclose the SRCR domain. 3 cysteine pairs are disulfide-bonded: Cys49–Cys113, Cys62–Cys123, and Cys93–Cys103. Asn69 and Asn102 each carry an N-linked (GlcNAc...) asparagine glycan. In terms of domain architecture, BTB spans 153 to 221 (CDLFIQVTGQ…FYSRRIEVTM (69 aa)). The BACK domain maps to 260–360 (PLELYAYAQA…VLPQELFELQ (101 aa)). 2 N-linked (GlcNAc...) asparagine glycosylation sites follow: Asn362 and Asn398.

In terms of assembly, homodimers and homomultimers. The multimers form ring-like structures with a diameter of 30-40 nm. Binds LGALS1 and LGALS3. Binds ITGB1, COL4A1, COL5A1, COL6A1, FN1 and NID. The unglycosylated form interacts with PDE4DIP; this interaction, which is PDE4DIP isoform-specific, may connect a pericentrosomal complex to the gamma-tubulin ring complex (gamma-TuRC) to promote microtubule assembly and acetylation.

The protein resides in the secreted. Its subcellular location is the extracellular space. It is found in the extracellular matrix. Promotes integrin-mediated cell adhesion. May stimulate host defense against viruses and tumor cells. This chain is Galectin-3-binding protein (LGALS3BP), found in Mesocricetus auratus (Golden hamster).